The chain runs to 273 residues: WIMGHMVNAIYQIDEFVNLGANSIETDVSFDDNANPEYTYHGIPCDCGRSCLKWENYNDFLKGLRSATTPGNSKYQSKLILVVFDLKTGSLYDNQASEAGKKLAKNLLKHYWNNGNNGGRAYIVLSIPDLNHYPLIKGFTDTLKQEGHPELLEKVGYDFSGNDAIGDVAKAYKKAGVSGHVWQSDGITNCLLRGLSRVKDAVANRDSGKGYINKVYYWTVDKRATTRDALDAGVDGVMTNYPDVIADVMNEAAYKSKVRLATYEDSPWVTFKK.

The active site involves His5. Mg(2+)-binding residues include Glu25 and Asp27. Catalysis depends on His41, which acts as the Nucleophile. 2 cysteine pairs are disulfide-bonded: Cys45-Cys51 and Cys47-Cys190. Mg(2+) is bound at residue Asp85.

The protein belongs to the arthropod phospholipase D family. Class II subfamily. Mg(2+) serves as cofactor. Expressed by the venom gland.

Its subcellular location is the secreted. The enzyme catalyses an N-(acyl)-sphingosylphosphocholine = an N-(acyl)-sphingosyl-1,3-cyclic phosphate + choline. It carries out the reaction an N-(acyl)-sphingosylphosphoethanolamine = an N-(acyl)-sphingosyl-1,3-cyclic phosphate + ethanolamine. It catalyses the reaction a 1-acyl-sn-glycero-3-phosphocholine = a 1-acyl-sn-glycero-2,3-cyclic phosphate + choline. The catalysed reaction is a 1-acyl-sn-glycero-3-phosphoethanolamine = a 1-acyl-sn-glycero-2,3-cyclic phosphate + ethanolamine. Dermonecrotic toxins cleave the phosphodiester linkage between the phosphate and headgroup of certain phospholipids (sphingolipid and lysolipid substrates), forming an alcohol (often choline) and a cyclic phosphate. This toxin acts on sphingomyelin (SM). It may also act on ceramide phosphoethanolamine (CPE), lysophosphatidylcholine (LPC) and lysophosphatidylethanolamine (LPE), but not on lysophosphatidylserine (LPS), and lysophosphatidylglycerol (LPG). It acts by transphosphatidylation, releasing exclusively cyclic phosphate products as second products. Induces dermonecrosis, hemolysis, increased vascular permeability, edema, inflammatory response, and platelet aggregation. This is Dermonecrotic toxin LhSicTox-alphaIA2biii from Loxosceles hirsuta (Recluse spider).